We begin with the raw amino-acid sequence, 175 residues long: MALTLEQKQQVVAEVSEVAANAYSAVAAEYHGIGVAKLTKLREQAREKGVVLKVVKNTLAKRAFEGTKFESMSDRMTGPLLLAFSMEDLGSAARVVFDFSKDNKALETKLVSVGGVVYGPEELERVSKLPTRDEAISILMATMNAPVTKLVQTMNAVPGKLVRTVAAIKDAKEAA.

This sequence belongs to the universal ribosomal protein uL10 family. In terms of assembly, part of the ribosomal stalk of the 50S ribosomal subunit. The N-terminus interacts with L11 and the large rRNA to form the base of the stalk. The C-terminus forms an elongated spine to which L12 dimers bind in a sequential fashion forming a multimeric L10(L12)X complex.

In terms of biological role, forms part of the ribosomal stalk, playing a central role in the interaction of the ribosome with GTP-bound translation factors. In Psychrobacter arcticus (strain DSM 17307 / VKM B-2377 / 273-4), this protein is Large ribosomal subunit protein uL10.